Reading from the N-terminus, the 1003-residue chain is Anoctamin-2 (1003 aa).

Residues M1–S68 form a disordered region. Over M1–A365 the chain is Cytoplasmic. The segment covering P10–P21 has biased composition (low complexity). The helical transmembrane segment at W366 to L386 threads the bilayer. The Extracellular segment spans residues Y387–H434. A glycan (N-linked (GlcNAc...) asparagine) is linked at N422. Residues L435 to F455 form a helical membrane-spanning segment. The Cytoplasmic segment spans residues L456–N538. A helical transmembrane segment spans residues F539–Y559. Residues R560–T582 lie on the Extracellular side of the membrane. Residues A583 to V603 traverse the membrane as a helical segment. Topologically, residues A604 to L623 are cytoplasmic. The chain crosses the membrane as a helical span at residues I624–F644. The Extracellular segment spans residues F645–E748. Residues M749 to F769 traverse the membrane as a helical segment. At A770 to G801 the chain is on the cytoplasmic side. Residues I802–I822 form a helical membrane-spanning segment. Residues A823 to L907 lie on the Extracellular side of the membrane. Residues N841, N849, and N856 are each glycosylated (N-linked (GlcNAc...) asparagine). A helical transmembrane segment spans residues A908 to I928. Over P929–V1003 the chain is Cytoplasmic. The disordered stretch occupies residues M961–V1003. A compositionally biased stretch (low complexity) spans R978–V1003. A DLG4 binding (PDZ) motif is present at residues T1001–V1003.

It belongs to the anoctamin family. As to quaternary structure, homodimer. Component of a presynaptic protein complex recruited to specialized plasma membrane domains of photoreceptors. Interacts with DLG4 by its C-terminal region. Retina, especially in the photoreceptor synaptic terminals.

The protein resides in the cell membrane. The enzyme catalyses chloride(in) = chloride(out). Its activity is regulated as follows. Channel activity is repressed by chloride inhibitors; strongly by niflumic acid (NFA), partially by flufenamic acid (FFA), and only slightly by meclofenamic acid (MFA), 5-Nitro-2-(3-phenylpropylamino)benzoic acid (NPPB), 4-acetamido-4'-isothiocyanato-stilben-2,2'-disulfonate (SITS), and 4,4'-diisothiocyanatostilbene-2,2'-disulfonic acid (DIDS). Calcium-activated chloride channel (CaCC) which may play a role in olfactory signal transduction. Odorant molecules bind to odor-sensing receptors (OSRs), leading to an increase in calcium entry that activates CaCC current which amplifies the depolarization of the OSR cells, ANO2 seems to be the underlying chloride channel involved in this process. May mediate light perception amplification in retina. This chain is Anoctamin-2 (ANO2), found in Homo sapiens (Human).